The following is a 500-amino-acid chain: Transcription factor-like 5 protein (500 aa).

Composition is skewed to pro residues over residues 1-12 (MSGPGPREPPPE) and 196-210 (AEPP…PPEP). Disordered stretches follow at residues 1 to 34 (MSGP…ALGE) and 191 to 211 (FNSI…PEPG). Residues 347–356 (MRQLDTNVER) form an R3 epitope (recognized by Chagas's antibodies) region. The tract at residues 365-410 (VGEGATATQGAWQSSESSQANLGEQAQSGPQGGRSQRRERHNRMER) is disordered. Positions 370–393 (TATQGAWQSSESSQANLGEQAQSG) are enriched in polar residues. A bHLH domain is found at 400–450 (QRRERHNRMERDRRRRIRICCDELNLLVPFCNAETDKATTLQWTTAFLKYI). The interval 481 to 500 (SLVTCPAQGSLQSSPSMEIK) is R1 epitope (recognized by Chagas's antibodies).

In terms of assembly, efficient DNA binding requires dimerization with another bHLH protein. Isoform 3 is testis specific. Isoform 2 is pancreas specific.

It is found in the nucleus. Its function is as follows. Putative transcription factor. Isoform 3 may play a role in early spermatogenesis. This Homo sapiens (Human) protein is Transcription factor-like 5 protein (TCFL5).